The chain runs to 250 residues: MFIFKRKKQVEMPLEKIPAHIGIIMDGNGRWAKKRLKPRVMGHKAGMDALQEVTIAASGLGVKVLTVYAFSTENWSRPDDEVKFIMNLPVKFFDKYVPELDKNNVRVQVIGDTHKLPKATYDAMQRACLRTKHNSGLVLNFALNYGGRSEITNAIKEIAQDVLEAKLNPDDITEDLVANHLMTNSLPYLYRDPDLIIRTSGELRLSNFLPWQSAYSEFYFTPVLWPDFKKDELHKAIVDYNQRHRRFGSV.

The active site involves Asp26. Asp26 contributes to the Mg(2+) binding site. Substrate-binding positions include 27-30 (GNGR), Trp31, Arg39, His43, and 71-73 (STE). Asn74 (proton acceptor) is an active-site residue. Substrate contacts are provided by residues Trp75, Arg77, Arg198, and 204-206 (RLS). Residue Glu217 participates in Mg(2+) binding.

Belongs to the UPP synthase family. Homodimer. Mg(2+) is required as a cofactor.

Catalyzes the condensation of isopentenyl diphosphate (IPP) with allylic pyrophosphates generating different type of terpenoids. The chain is Isoprenyl transferase from Streptococcus agalactiae serotype V (strain ATCC BAA-611 / 2603 V/R).